A 434-amino-acid chain; its full sequence is D-amino acid dehydrogenase (434 aa).

3-17 contacts FAD; that stretch reads VVILGSGVVGVTSAW.

The protein belongs to the DadA oxidoreductase family. The cofactor is FAD.

The catalysed reaction is a D-alpha-amino acid + A + H2O = a 2-oxocarboxylate + AH2 + NH4(+). Its pathway is amino-acid degradation; D-alanine degradation; NH(3) and pyruvate from D-alanine: step 1/1. Oxidative deamination of D-amino acids. In Yersinia pseudotuberculosis serotype O:1b (strain IP 31758), this protein is D-amino acid dehydrogenase.